Here is a 375-residue protein sequence, read N- to C-terminus: Erythronate-4-phosphate dehydrogenase (375 aa).

Ser-49 contacts substrate. 2 residues coordinate NAD(+): Asp-150 and Thr-178. Residue Arg-211 is part of the active site. Asp-231 lines the NAD(+) pocket. The active site involves Glu-236. His-253 acts as the Proton donor in catalysis. NAD(+) is bound at residue Gly-256.

It belongs to the D-isomer specific 2-hydroxyacid dehydrogenase family. PdxB subfamily. Homodimer.

It localises to the cytoplasm. It catalyses the reaction 4-phospho-D-erythronate + NAD(+) = (R)-3-hydroxy-2-oxo-4-phosphooxybutanoate + NADH + H(+). Its pathway is cofactor biosynthesis; pyridoxine 5'-phosphate biosynthesis; pyridoxine 5'-phosphate from D-erythrose 4-phosphate: step 2/5. In terms of biological role, catalyzes the oxidation of erythronate-4-phosphate to 3-hydroxy-2-oxo-4-phosphonooxybutanoate. In Hydrogenovibrio crunogenus (strain DSM 25203 / XCL-2) (Thiomicrospira crunogena), this protein is Erythronate-4-phosphate dehydrogenase.